Consider the following 156-residue polypeptide: ATP synthase subunit b (156 aa).

A helical membrane pass occupies residues 7 to 27 (LVAQMVVFFILWWVVAKFIWP).

Belongs to the ATPase B chain family. In terms of assembly, F-type ATPases have 2 components, F(1) - the catalytic core - and F(0) - the membrane proton channel. F(1) has five subunits: alpha(3), beta(3), gamma(1), delta(1), epsilon(1). F(0) has three main subunits: a(1), b(2) and c(10-14). The alpha and beta chains form an alternating ring which encloses part of the gamma chain. F(1) is attached to F(0) by a central stalk formed by the gamma and epsilon chains, while a peripheral stalk is formed by the delta and b chains.

It is found in the cell inner membrane. F(1)F(0) ATP synthase produces ATP from ADP in the presence of a proton or sodium gradient. F-type ATPases consist of two structural domains, F(1) containing the extramembraneous catalytic core and F(0) containing the membrane proton channel, linked together by a central stalk and a peripheral stalk. During catalysis, ATP synthesis in the catalytic domain of F(1) is coupled via a rotary mechanism of the central stalk subunits to proton translocation. Functionally, component of the F(0) channel, it forms part of the peripheral stalk, linking F(1) to F(0). The protein is ATP synthase subunit b of Ralstonia pickettii (strain 12J).